Consider the following 277-residue polypeptide: Histone-lysine N-methyltransferase set-17 (277 aa).

One can recognise an SET domain in the interval 135–246 (FRIEESKLPN…INQELLVWYG (112 aa)). Position 245 (Y245) interacts with S-adenosyl-L-methionine.

Belongs to the class V-like SAM-binding methyltransferase superfamily. As to expression, expressed in the germline. Predominantly expressed in primary spermatocytes. Also expressed in the oocyte-producing germline of hermaphrodites.

The protein resides in the nucleus. It catalyses the reaction N(6)-methyl-L-lysyl(4)-[histone H3] + S-adenosyl-L-methionine = N(6),N(6)-dimethyl-L-lysyl(4)-[histone H3] + S-adenosyl-L-homocysteine + H(+). The catalysed reaction is L-lysyl(4)-[histone H3] + S-adenosyl-L-methionine = N(6)-methyl-L-lysyl(4)-[histone H3] + S-adenosyl-L-homocysteine + H(+). In terms of biological role, histone methyltransferase that specifically mono- and di-methylates 'Lys-4' of histone H3 in vitro. Does not tri-methylate 'Lys-4' of histone H3 in vitro. Promotes spermatid development and fertility by positively regulating the transcription of spermatocyte-specific genes in primary spermatocytes. Together with spr-5, required for transgenerational fertility. The sequence is that of Histone-lysine N-methyltransferase set-17 from Caenorhabditis elegans.